The following is a 117-amino-acid chain: Large ribosomal subunit protein bL20c (117 aa).

The protein belongs to the bacterial ribosomal protein bL20 family.

The protein resides in the plastid. It localises to the chloroplast. Functionally, binds directly to 23S ribosomal RNA and is necessary for the in vitro assembly process of the 50S ribosomal subunit. It is not involved in the protein synthesizing functions of that subunit. In Draba nemorosa (Woodland whitlowgrass), this protein is Large ribosomal subunit protein bL20c.